A 794-amino-acid polypeptide reads, in one-letter code: Phosphoribosylformylglycinamidine synthase subunit PurL (794 aa).

His47 is an active-site residue. Positions 50 and 89 each coordinate ATP. Glu91 contacts Mg(2+). Residues 92-95 and Arg114 contribute to the substrate site; that span reads SHNH. His93 serves as the catalytic Proton acceptor. Mg(2+) is bound at residue Asp115. Gln238 lines the substrate pocket. Residue Asp266 coordinates Mg(2+). Residue 310-312 participates in substrate binding; it reads ESQ. ATP-binding residues include Asp522 and Gly559. Asn560 is a binding site for Mg(2+). Ser562 lines the substrate pocket.

The protein belongs to the FGAMS family. In terms of assembly, monomer. Part of the FGAM synthase complex composed of 1 PurL, 1 PurQ and 2 PurS subunits.

The protein localises to the cytoplasm. The enzyme catalyses N(2)-formyl-N(1)-(5-phospho-beta-D-ribosyl)glycinamide + L-glutamine + ATP + H2O = 2-formamido-N(1)-(5-O-phospho-beta-D-ribosyl)acetamidine + L-glutamate + ADP + phosphate + H(+). It participates in purine metabolism; IMP biosynthesis via de novo pathway; 5-amino-1-(5-phospho-D-ribosyl)imidazole from N(2)-formyl-N(1)-(5-phospho-D-ribosyl)glycinamide: step 1/2. Part of the phosphoribosylformylglycinamidine synthase complex involved in the purines biosynthetic pathway. Catalyzes the ATP-dependent conversion of formylglycinamide ribonucleotide (FGAR) and glutamine to yield formylglycinamidine ribonucleotide (FGAM) and glutamate. The FGAM synthase complex is composed of three subunits. PurQ produces an ammonia molecule by converting glutamine to glutamate. PurL transfers the ammonia molecule to FGAR to form FGAM in an ATP-dependent manner. PurS interacts with PurQ and PurL and is thought to assist in the transfer of the ammonia molecule from PurQ to PurL. This Prochlorococcus marinus (strain MIT 9303) protein is Phosphoribosylformylglycinamidine synthase subunit PurL.